A 265-amino-acid chain; its full sequence is Neuronal membrane glycoprotein M6-b (265 aa).

The helical transmembrane segment at Gly31–Phe51 threads the bilayer. Asn73 carries an N-linked (GlcNAc...) asparagine glycan. 2 helical membrane passes run Val90–Phe110 and Phe136–Val156. Residue Asn177 is glycosylated (N-linked (GlcNAc...) asparagine). A helical transmembrane segment spans residues Leu224–Met244. Ser257 is subject to Phosphoserine.

It belongs to the myelin proteolipid protein family. Interacts with SERT. Highly expressed in the ventral medullary surface, moderately in the cerebral cortex and cerebellum, poorly in lung and kidney, and not at all in heart, skeletal muscle, liver, stomach or stomach.

Its subcellular location is the membrane. It is found in the cell membrane. Functionally, may be involved in neural development. Involved in regulation of osteoblast function and bone formation. Involved in matrix vesicle release by osteoblasts; this function seems to involve maintenance of the actin cytoskeleton. May be involved in cellular trafficking of SERT and thereby in regulation of serotonin uptake. The sequence is that of Neuronal membrane glycoprotein M6-b (Gpm6b) from Rattus norvegicus (Rat).